The following is a 1160-amino-acid chain: Carbamoyl phosphate synthase arginine-specific large chain, mitochondrial (1160 aa).

The interval 81 to 478 is carboxyphosphate synthetic domain; it reads AEHEKVKKVV…SLQKALRQVD (398 aa). ATP is bound by residues Arg208, Arg248, Gly254, Gly255, Lys285, Leu287, Glu292, Gly318, Ile319, His320, Gln361, and Glu375. Positions 212–404 constitute an ATP-grasp 1 domain; sequence AKALNEINIP…LAYTAAKIAL (193 aa). Positions 361, 375, and 377 each coordinate Mg(2+). Gln361, Glu375, and Asn377 together coordinate Mn(2+). Residues 479 to 623 form an oligomerization domain region; sequence PSFLGFMAMP…YTSYNASSHD (145 aa). A carbamoyl phosphate synthetic domain region spans residues 624-1012; that stretch reads IDFNEHGTMV…AYWAALQSTQ (389 aa). Residues 748 to 946 enclose the ATP-grasp 2 domain; the sequence is SQILDKIGVD…FIDVATRSII (199 aa). Arg784, Lys823, Ile825, Glu830, Gly855, Val856, His857, Ser858, Gln898, and Glu917 together coordinate ATP. Mg(2+)-binding residues include Gln898, Glu917, and Asn919. Residues Gln898, Glu917, and Asn919 each coordinate Mn(2+). An allosteric domain region spans residues 1013 to 1144; the sequence is NFKIPLPGQG…PSVLSEKKEM (132 aa). Residues 1014–1160 form the MGS-like domain; that stretch reads FKIPLPGQGI…WSEWIGSHDL (147 aa).

This sequence belongs to the CarB family. Heterodimer composed of 2 chains; the small (or glutamine) chain promotes the hydrolysis of glutamine to ammonia, which is used by the large (or ammonia) chain to synthesize carbamoyl phosphate. Requires Mg(2+) as cofactor. The cofactor is Mn(2+).

It is found in the mitochondrion. It carries out the reaction hydrogencarbonate + L-glutamine + 2 ATP + H2O = carbamoyl phosphate + L-glutamate + 2 ADP + phosphate + 2 H(+). The enzyme catalyses hydrogencarbonate + NH4(+) + 2 ATP = carbamoyl phosphate + 2 ADP + phosphate + 2 H(+). It participates in amino-acid biosynthesis; L-arginine biosynthesis; carbamoyl phosphate from bicarbonate: step 1/1. Large subunit of the arginine-specific carbamoyl phosphate synthase (CPSase). CPSase catalyzes the formation of carbamoyl phosphate from the ammonia moiety of glutamine, hydrogencarbonate, and phosphate donated by ATP, the first step of the arginine biosynthetic pathway. The large subunit (synthetase) binds the substrates ammonia (free or transferred from glutamine from the small subunit), hydrogencarbonate and ATP and carries out an ATP-coupled ligase reaction, activating hydrogencarbonate by forming carboxy phosphate which reacts with ammonia to form carbamoyl phosphate. The polypeptide is Carbamoyl phosphate synthase arginine-specific large chain, mitochondrial (arg4) (Schizosaccharomyces pombe (strain 972 / ATCC 24843) (Fission yeast)).